A 322-amino-acid chain; its full sequence is Lipoyl synthase (322 aa).

[4Fe-4S] cluster-binding residues include Cys-69, Cys-74, Cys-80, Cys-95, Cys-99, Cys-102, and Ser-309. A Radical SAM core domain is found at 81-298 (FNHGTATFMI…KEIALELGFT (218 aa)).

It belongs to the radical SAM superfamily. Lipoyl synthase family. Requires [4Fe-4S] cluster as cofactor.

It localises to the cytoplasm. It catalyses the reaction [[Fe-S] cluster scaffold protein carrying a second [4Fe-4S](2+) cluster] + N(6)-octanoyl-L-lysyl-[protein] + 2 oxidized [2Fe-2S]-[ferredoxin] + 2 S-adenosyl-L-methionine + 4 H(+) = [[Fe-S] cluster scaffold protein] + N(6)-[(R)-dihydrolipoyl]-L-lysyl-[protein] + 4 Fe(3+) + 2 hydrogen sulfide + 2 5'-deoxyadenosine + 2 L-methionine + 2 reduced [2Fe-2S]-[ferredoxin]. It functions in the pathway protein modification; protein lipoylation via endogenous pathway; protein N(6)-(lipoyl)lysine from octanoyl-[acyl-carrier-protein]: step 2/2. In terms of biological role, catalyzes the radical-mediated insertion of two sulfur atoms into the C-6 and C-8 positions of the octanoyl moiety bound to the lipoyl domains of lipoate-dependent enzymes, thereby converting the octanoylated domains into lipoylated derivatives. This chain is Lipoyl synthase, found in Photobacterium profundum (strain SS9).